Reading from the N-terminus, the 125-residue chain is Protein sigma-1-small (125 aa).

Belongs to the orthoreovirus sigma-1s protein family.

This chain is Protein sigma-1-small (S1), found in Mammalia (T2J).